The primary structure comprises 245 residues: Type II restriction enzyme EcoRV (245 aa).

Mg(2+)-binding residues include Glu45, Asp74, and Asp90. Catalysis depends on residues Asp74, Asp90, and Lys92.

In terms of assembly, homodimer. Mg(2+) is required as a cofactor.

The catalysed reaction is Endonucleolytic cleavage of DNA to give specific double-stranded fragments with terminal 5'-phosphates.. Its function is as follows. A P subtype restriction enzyme that recognizes the double-stranded sequence 5'-GATATC-3' and cleaves after T-3. The chain is Type II restriction enzyme EcoRV (ecoRVR) from Escherichia coli.